A 427-amino-acid chain; its full sequence is UPF0229 protein YeaH (427 aa).

The segment covering 79–90 has biased composition (basic and acidic residues); the sequence is NDHFIQNDRIER. Positions 79–110 are disordered; it reads NDHFIQNDRIERPQGGGGGSGSGQGQASQDGE. The span at 92–102 shows a compositional bias: gly residues; that stretch reads QGGGGGSGSGQ.

This sequence belongs to the UPF0229 family.

In Salmonella paratyphi B (strain ATCC BAA-1250 / SPB7), this protein is UPF0229 protein YeaH.